A 274-amino-acid chain; its full sequence is Large ribosomal subunit protein uL2 (274 aa).

Disordered regions lie at residues 28–54 and 224–274; these read APHA…TRHI and VAMN…RRRK. Residues 263–274 are compositionally biased toward basic and acidic residues; the sequence is KRTDKMIVRRRK.

Belongs to the universal ribosomal protein uL2 family. Part of the 50S ribosomal subunit. Forms a bridge to the 30S subunit in the 70S ribosome.

In terms of biological role, one of the primary rRNA binding proteins. Required for association of the 30S and 50S subunits to form the 70S ribosome, for tRNA binding and peptide bond formation. It has been suggested to have peptidyltransferase activity; this is somewhat controversial. Makes several contacts with the 16S rRNA in the 70S ribosome. The protein is Large ribosomal subunit protein uL2 of Pseudomonas savastanoi pv. phaseolicola (strain 1448A / Race 6) (Pseudomonas syringae pv. phaseolicola (strain 1448A / Race 6)).